Consider the following 341-residue polypeptide: UPF0324 membrane protein SMU_2059c (341 aa).

11 helical membrane passes run 7 to 24 (KLSG…AWFL), 28 to 47 (FPLV…LAIF), 68 to 85 (FAVV…VLTV), 90 to 107 (LPII…AFLL), 120 to 142 (LVGV…VIQA), 147 to 169 (IAQS…PTLG), 178 to 200 (GFAL…AAAW), 211 to 233 (GATI…LSFY), 254 to 276 (VFPM…TALG), 291 to 310 (FCIV…VKLV), and 317 to 339 (IVLG…HLLG).

This sequence belongs to the UPF0324 family.

The protein localises to the cell membrane. This is UPF0324 membrane protein SMU_2059c from Streptococcus mutans serotype c (strain ATCC 700610 / UA159).